Consider the following 89-residue polypeptide: Putative membrane protein insertion efficiency factor (89 aa).

The disordered stretch occupies residues 69–89; the sequence is DPVPPAHTERGGTMCPSRLPE.

This sequence belongs to the UPF0161 family.

It is found in the cell inner membrane. Functionally, could be involved in insertion of integral membrane proteins into the membrane. The chain is Putative membrane protein insertion efficiency factor from Paramagnetospirillum magneticum (strain ATCC 700264 / AMB-1) (Magnetospirillum magneticum).